Consider the following 53-residue polypeptide: uncharacterized protein (53 aa).

Residues 28–45 traverse the membrane as a helical segment; sequence AIVFSLAVFGIVEAYYYW.

It is found in the host membrane. This is an uncharacterized protein from Acidianus convivator (ABV).